We begin with the raw amino-acid sequence, 112 residues long: Beta-defensin 126 (112 aa).

An N-terminal signal peptide occupies residues 1-20 (MKSLLFTLAVFMLLAQLVSG). The in vitro binds to LPS, mediates antimicrobial activity and inhibits LPS-mediated inflammation stretch occupies residues 21–63 (NWYVKKCLNDVGICKKKCKPEELHVKNGRAMCGKQRDCCVPAD). 3 disulfides stabilise this stretch: C27–C58, C34–C52, and C38–C59.

The protein belongs to the beta-defensin family. In terms of assembly, homodimer or homooligomer; disulfide-linked. O-glycosylated; glycans contain alpha(2,3)-linked sialic acids.

It localises to the secreted. In terms of biological role, highly glycosylated atypical beta-defensin involved in several aspects of sperm function. Facilitates sperm transport in the female reproductive tract and contributes to sperm protection against immunodetection; both functions are probably implicating the negative surface charge provided by its O-linked oligosaccharides in the sperm glycocalyx. Involved in binding of sperm to oviductal epithelial cells to form a sperm reservoir until ovulation. Release from the sperm surface during capacitation and ovaluation by an elevation of oviductal fluid pH is unmasking other surface components and allows sperm to penetrate the cumulus matrix and bind to the zona pellucida of the oocyte. In vitro has antimicrobial activity and may inhibit LPS-mediated inflammation. This is Beta-defensin 126 (DEFB126) from Hylobates lar (Lar gibbon).